A 142-amino-acid chain; its full sequence is MALNCDDKAHIRAIWPCLASHAEQYGAEALHRMFLCHPQTKTYFPNFDFHANSAHLKNHGKKVMNALTDAVKHLDHPEASLSSLSDLHAFTLRVDPGNFALLSNNILVVVAVHHSDKLSYETHQALDKFLNVVSGLLTSKYR.

An N-acetylalanine modification is found at alanine 2. Positions 2–142 (ALNCDDKAHI…VSGLLTSKYR (141 aa)) constitute a Globin domain. Histidine 59 contributes to the O2 binding site. Histidine 88 contacts heme b.

This sequence belongs to the globin family. As to quaternary structure, heterotetramer of either two alpha-B chains or two alpha-C chains and two beta chains. The two major hemoglobins, B and C, associate upon deoxygenation to form a trimer of tetramers, BC2, that has a much lower affinity for oxygen than either component alone. In terms of tissue distribution, red blood cells.

Functionally, the alpha-C chain is a component of adult hemoglobin C. This chain is Hemoglobin subunit alpha-C, found in Aquarana catesbeiana (American bullfrog).